The sequence spans 122 residues: Ribosome-binding factor A (122 aa).

It belongs to the RbfA family. In terms of assembly, monomer. Binds 30S ribosomal subunits, but not 50S ribosomal subunits or 70S ribosomes.

It localises to the cytoplasm. Functionally, one of several proteins that assist in the late maturation steps of the functional core of the 30S ribosomal subunit. Associates with free 30S ribosomal subunits (but not with 30S subunits that are part of 70S ribosomes or polysomes). Required for efficient processing of 16S rRNA. May interact with the 5'-terminal helix region of 16S rRNA. The sequence is that of Ribosome-binding factor A from Pelobacter propionicus (strain DSM 2379 / NBRC 103807 / OttBd1).